A 295-amino-acid chain; its full sequence is MKQYLLGFTLVFALIACAQKGANPEQKGGDADVLNTSKTEKYLNKNLPSEAEDLVSLFNDSEIFVSKEKNKDGKYVLRAIVDTVELKGVADKNDGSEGKLEGLKPDNSKVTMSISKDQNTITIETRDSSNTKVASKVFKKDGSLTEESYKAGQLDSKKLTRSNKTTLEYSDMTNAENATTAIETLKNGIEFKGSLVGGKATLQIVESTVTLTREIDKDGKLKIYLKDTASSSKKTVSWNDTDTLTISAEGKKTKDLVFLTDGTITVQNYDSASGTTLEGTATEIKNLEALKTALK.

The N-terminal stretch at 1–16 (MKQYLLGFTLVFALIA) is a signal peptide. Cys17 is lipidated: N-palmitoyl cysteine. Cys17 carries the S-diacylglycerol cysteine lipid modification.

It is found in the cell outer membrane. The protein is Outer surface protein B (ospB) of Borreliella burgdorferi (Lyme disease spirochete).